Reading from the N-terminus, the 86-residue chain is Triple QxxK/R motif-containing protein (86 aa).

Residues 51 to 71 (VGLVLAAILALLLAFYAFFYL) form a helical membrane-spanning segment.

The protein belongs to the TRIQK family.

It localises to the endoplasmic reticulum membrane. In terms of biological role, may play a role in cell growth and maintenance of cell morphology. The polypeptide is Triple QxxK/R motif-containing protein (TRIQK) (Pongo abelii (Sumatran orangutan)).